A 152-amino-acid chain; its full sequence is UPF0756 membrane protein Moth_1009 (152 aa).

4 helical membrane passes run 5–25 (LIIL…VALA), 41–61 (IFPF…IAAI), 75–95 (LGHV…LITT), and 117–137 (LILG…GPFI).

This sequence belongs to the UPF0756 family.

Its subcellular location is the cell membrane. This chain is UPF0756 membrane protein Moth_1009, found in Moorella thermoacetica (strain ATCC 39073 / JCM 9320).